We begin with the raw amino-acid sequence, 188 residues long: ATP synthase subunit b (188 aa).

A helical membrane pass occupies residues 30-50 (IVWSLIPFLIILIVFWKLVLP).

Belongs to the ATPase B chain family. In terms of assembly, F-type ATPases have 2 components, F(1) - the catalytic core - and F(0) - the membrane proton channel. F(1) has five subunits: alpha(3), beta(3), gamma(1), delta(1), epsilon(1). F(0) has three main subunits: a(1), b(2) and c(10-14). The alpha and beta chains form an alternating ring which encloses part of the gamma chain. F(1) is attached to F(0) by a central stalk formed by the gamma and epsilon chains, while a peripheral stalk is formed by the delta and b chains.

The protein resides in the cell membrane. Its function is as follows. F(1)F(0) ATP synthase produces ATP from ADP in the presence of a proton or sodium gradient. F-type ATPases consist of two structural domains, F(1) containing the extramembraneous catalytic core and F(0) containing the membrane proton channel, linked together by a central stalk and a peripheral stalk. During catalysis, ATP synthesis in the catalytic domain of F(1) is coupled via a rotary mechanism of the central stalk subunits to proton translocation. Component of the F(0) channel, it forms part of the peripheral stalk, linking F(1) to F(0). The sequence is that of ATP synthase subunit b from Corynebacterium glutamicum (strain R).